The following is a 249-amino-acid chain: Transcription repressor MYB5 (249 aa).

HTH myb-type domains are found at residues 20–72 (KMGM…MNYL) and 73–127 (RPSV…RKKL). DNA-binding regions (H-T-H motif) lie at residues 48-72 (WRSL…MNYL) and 100-123 (WSLI…NTHL). Positions 133–180 (DPQTHKPLDANNIHKPEEEVSGGQKYPLEPISSSHTDDTTVNGGDGDS) are disordered. Positions 135–150 (QTHKPLDANNIHKPEE) are enriched in basic and acidic residues.

As to quaternary structure, interacts with BHLH002/EGL3/MYC146, BHLH012/MYC1 and BHLH042/TT8. Siliques.

The protein resides in the nucleus. In terms of biological role, transcription activator, when associated with BHLH002/EGL3/MYC146, BHLH012/MYC1 or BHLH042/TT8. This Arabidopsis thaliana (Mouse-ear cress) protein is Transcription repressor MYB5 (MYB5).